Consider the following 142-residue polypeptide: Large ribosomal subunit protein uL13 (142 aa).

It belongs to the universal ribosomal protein uL13 family. Part of the 50S ribosomal subunit.

In terms of biological role, this protein is one of the early assembly proteins of the 50S ribosomal subunit, although it is not seen to bind rRNA by itself. It is important during the early stages of 50S assembly. In Koribacter versatilis (strain Ellin345), this protein is Large ribosomal subunit protein uL13.